Reading from the N-terminus, the 380-residue chain is Protein GOLM2 (380 aa).

An N-acetylmethionine modification is found at M1. Over 1–14 the chain is Cytoplasmic; sequence MVGFGANRRAGRLP. A helical; Signal-anchor for type II membrane protein membrane pass occupies residues 15–35; sequence SLVLAVLLVVIAVLAFNYWSI. Positions 35 to 195 form a coiled coil; the sequence is ISSRHVLLQE…QFLQEQKQEA (161 aa). The Lumenal portion of the chain corresponds to 36–380; sequence SSRHVLLQEE…YGKQRFNDAL (345 aa). Basic and acidic residues-rich tracts occupy residues 192 to 212 and 227 to 247; these read KQEA…DNHA and KNEE…KRGG. A disordered region spans residues 192 to 254; the sequence is KQEAHKFESK…RGGDAGMPGI (63 aa). A phosphoserine mark is found at S233 and S275. A disordered region spans residues 280–380; the sequence is ESHQVISHLP…YGKQRFNDAL (101 aa). Polar residues predominate over residues 305 to 321; it reads NHNGNSRTSKQNPSNPL. Residues 344–380 show a composition bias toward basic and acidic residues; the sequence is ATKDRAGDFHKLKQNDEERELQMDPADYGKQRFNDAL.

This sequence belongs to the GOLM family.

It is found in the membrane. The protein is Protein GOLM2 (GOLM2) of Bos taurus (Bovine).